Consider the following 82-residue polypeptide: uncharacterized protein (82 aa).

Helical transmembrane passes span 4-26 (IAVLFIVFGFPIVAGVFGIAGHF), 31-50 (FWVAPLIVLITSLILLVTLA), and 55-77 (SFIFWVVMYTAIALVTSVATLFL).

The protein localises to the cell membrane. This is an uncharacterized protein from Bacillus subtilis (strain 168).